The primary structure comprises 165 residues: Disulfide bond formation protein B (165 aa).

Residues 1-16 (MTILNSLNQFSKGRLS) are Cytoplasmic-facing. A helical transmembrane segment spans residues 17–33 (WLLLLLFVVFFEACALY). Residues 34–51 (FQHVMMLAPCVMCIYERV) lie on the Periplasmic side of the membrane. A disulfide bond links Cys43 and Cys46. The helical transmembrane segment at 52 to 67 (AMMGVGVAAIVGLMAP) threads the bilayer. Over 68–74 (NNPIFRW) the chain is Cytoplasmic. Residues 75 to 92 (LGLIGWGLSSYKGLLLAQ) traverse the membrane as a helical segment. Over 93–147 (QHVDYQFNPSPFATCDLFVTFPSWRPLNQWAPWIFEAYGDCSKIVWQFLDLSMPQ) the chain is Periplasmic. Residues Cys107 and Cys133 are joined by a disulfide bond. Residues 148 to 165 (WLVVIFAGNLIALALIVI) form a helical membrane-spanning segment.

This sequence belongs to the DsbB family.

It localises to the cell inner membrane. In terms of biological role, required for disulfide bond formation in some periplasmic proteins. Acts by oxidizing the DsbA protein. The chain is Disulfide bond formation protein B from Vibrio alginolyticus.